Consider the following 194-residue polypeptide: ATP-dependent Clp protease proteolytic subunit (194 aa).

Ser-98 serves as the catalytic Nucleophile. His-123 is a catalytic residue.

Belongs to the peptidase S14 family. As to quaternary structure, fourteen ClpP subunits assemble into 2 heptameric rings which stack back to back to give a disk-like structure with a central cavity, resembling the structure of eukaryotic proteasomes.

It localises to the cytoplasm. It carries out the reaction Hydrolysis of proteins to small peptides in the presence of ATP and magnesium. alpha-casein is the usual test substrate. In the absence of ATP, only oligopeptides shorter than five residues are hydrolyzed (such as succinyl-Leu-Tyr-|-NHMec, and Leu-Tyr-Leu-|-Tyr-Trp, in which cleavage of the -Tyr-|-Leu- and -Tyr-|-Trp bonds also occurs).. Its function is as follows. Cleaves peptides in various proteins in a process that requires ATP hydrolysis. Has a chymotrypsin-like activity. Plays a major role in the degradation of misfolded proteins. This is ATP-dependent Clp protease proteolytic subunit from Syntrophus aciditrophicus (strain SB).